We begin with the raw amino-acid sequence, 505 residues long: Lysine--tRNA ligase (505 aa).

Mg(2+) contacts are provided by Glu415 and Glu422.

The protein belongs to the class-II aminoacyl-tRNA synthetase family. As to quaternary structure, homodimer. Requires Mg(2+) as cofactor.

The protein localises to the cytoplasm. The enzyme catalyses tRNA(Lys) + L-lysine + ATP = L-lysyl-tRNA(Lys) + AMP + diphosphate. The sequence is that of Lysine--tRNA ligase from Xanthomonas campestris pv. campestris (strain 8004).